We begin with the raw amino-acid sequence, 1208 residues long: DNA-directed RNA polymerase subunit beta (1208 aa).

It belongs to the RNA polymerase beta chain family. As to quaternary structure, the RNAP catalytic core consists of 2 alpha, 1 beta, 1 beta' and 1 omega subunit. When a sigma factor is associated with the core the holoenzyme is formed, which can initiate transcription.

It carries out the reaction RNA(n) + a ribonucleoside 5'-triphosphate = RNA(n+1) + diphosphate. In terms of biological role, DNA-dependent RNA polymerase catalyzes the transcription of DNA into RNA using the four ribonucleoside triphosphates as substrates. The sequence is that of DNA-directed RNA polymerase subunit beta from Enterococcus faecium (Streptococcus faecium).